The chain runs to 204 residues: MRTFVHGGGRLPEGIDAALAHYRHQVFVGRLGWQLPMADGTFERDQYDRDDTVYVVARDEGGTICGCARLLPTTRPYLLKDVFASLLMHGMPPPESPEVWELSRFAARSGAPCPRSGRADWAVRPMLASVVQCAAQRGARRLIGATFVSMVRLFRRIGVRAHRAGPVRCIGGRPVVACWIDIDASTCAALGIPSASAAPGPVLQ.

It belongs to the autoinducer synthase family.

The catalysed reaction is a fatty acyl-[ACP] + S-adenosyl-L-methionine = an N-acyl-L-homoserine lactone + S-methyl-5'-thioadenosine + holo-[ACP] + H(+). Functionally, required for the synthesis of acyl-HSL autoinducers that bind to SolR. This Ralstonia solanacearum (Pseudomonas solanacearum) protein is Acyl-homoserine-lactone synthase (solI).